We begin with the raw amino-acid sequence, 312 residues long: Formate dehydrogenase iron-sulfur subunit (312 aa).

4Fe-4S ferredoxin-type domains are found at residues 35–65 (IAKL…SDIN), 97–129 (LEWL…QYAN), 130–159 (GIVD…MNPE), and 164–195 (YKCT…FGSK). The [4Fe-4S] cluster site is built by C44, C47, C50, C54, C106, C109, C114, C118, C139, C142, C145, C149, C166, C169, C181, and C185.

Formate dehydrogenase is a membrane-bound complex, formed by subunits alpha, beta and gamma. The cofactor is [4Fe-4S] cluster.

It localises to the cell membrane. Allows to use formate as major electron donor during aerobic respiration. The beta chain is an electron transfer unit containing 4 cysteine clusters involved in the formation of iron-sulfur centers. Electrons are transferred from the gamma chain to the molybdenum cofactor of the alpha subunit. The chain is Formate dehydrogenase iron-sulfur subunit (fdxH) from Haemophilus influenzae (strain ATCC 51907 / DSM 11121 / KW20 / Rd).